The sequence spans 217 residues: Membrane-associated progesterone receptor component 2 (217 aa).

O-linked (Xyl...) (chondroitin sulfate) serine glycosylation is present at serine 15. A helical transmembrane segment spans residues 40–62 (ALLATGGEMLLNVALVALVLLGA). Residues serine 84, serine 98, and serine 202 each carry the phosphoserine modification. A Cytochrome b5 heme-binding domain is found at 96–195 (DFSLEQLRQY…EKYDYVGRLL (100 aa)). Residues 196–217 (KPGEEPSEYTDEEDTKDHSKQD) form a disordered region. Residues 200–209 (EPSEYTDEED) show a composition bias toward acidic residues. Tyrosine 204 carries the post-translational modification Phosphotyrosine. Residue threonine 205 is modified to Phosphothreonine.

It belongs to the cytochrome b5 family. MAPR subfamily. Interacts with PGRMC1. Interacts with AAAS.

The protein localises to the membrane. It localises to the nucleus envelope. Its subcellular location is the endoplasmic reticulum. It is found in the secreted. In terms of biological role, required for the maintenance of uterine histoarchitecture and normal female reproductive lifespan. May serve as a universal non-classical progesterone receptor in the uterus. Intracellular heme chaperone required for delivery of labile, or signaling heme, to the nucleus. Plays a role in adipocyte function and systemic glucose homeostasis. In brown fat, which has a high demand for heme, delivery of labile heme in the nucleus regulates the activity of heme-responsive transcriptional repressors such as NR1D1 and BACH1. The chain is Membrane-associated progesterone receptor component 2 from Rattus norvegicus (Rat).